Reading from the N-terminus, the 141-residue chain is HTH-type transcriptional regulator LrpA (141 aa).

Positions 2-63 constitute an HTH asnC-type domain; sequence VDERDKIILD…KINPKKLGYS (62 aa). Positions 21 to 40 form a DNA-binding region, H-T-H motif; it reads FTEIAKILGISETAVRKRVK.

As to quaternary structure, homooctamer; tetramer of dimers.

Its function is as follows. DNA-binding protein that negatively regulates its own transcription. Interferes with RNA polymerase (RNAP) recruitment by inhibiting the association of RNAP with the TBP-TFB promoter complex. The polypeptide is HTH-type transcriptional regulator LrpA (lrpA) (Pyrococcus abyssi (strain GE5 / Orsay)).